We begin with the raw amino-acid sequence, 166 residues long: Large ribosomal subunit protein uL10 (166 aa).

Belongs to the universal ribosomal protein uL10 family. As to quaternary structure, part of the ribosomal stalk of the 50S ribosomal subunit. The N-terminus interacts with L11 and the large rRNA to form the base of the stalk. The C-terminus forms an elongated spine to which L12 dimers bind in a sequential fashion forming a multimeric L10(L12)X complex.

Functionally, forms part of the ribosomal stalk, playing a central role in the interaction of the ribosome with GTP-bound translation factors. This is Large ribosomal subunit protein uL10 from Tropheryma whipplei (strain TW08/27) (Whipple's bacillus).